Consider the following 87-residue polypeptide: Small ribosomal subunit protein bS20 (87 aa).

This sequence belongs to the bacterial ribosomal protein bS20 family.

Its function is as follows. Binds directly to 16S ribosomal RNA. The polypeptide is Small ribosomal subunit protein bS20 (Roseobacter denitrificans (strain ATCC 33942 / OCh 114) (Erythrobacter sp. (strain OCh 114))).